We begin with the raw amino-acid sequence, 81 residues long: Dermaseptin-S6 (81 aa).

Positions 1-22 are cleaved as a signal peptide; sequence MDILKKSLFFILFLGLVSLSIS. The segment at 22–49 is disordered; sequence SEEEKRENEDEEDQEDDEQSEEKRGLWS. Residues 23-45 constitute a propeptide that is removed on maturation; sequence EEEKRENEDEEDQEDDEQSEEKR. Residues 30-41 are compositionally biased toward acidic residues; that stretch reads EDEEDQEDDEQS. At I78 the chain carries Isoleucine amide. A propeptide spanning residues 80–81 is cleaved from the precursor; that stretch reads EQ.

Belongs to the frog skin active peptide (FSAP) family. Dermaseptin subfamily. Expressed by the skin glands.

The protein localises to the secreted. Functionally, antimicrobial peptide. The polypeptide is Dermaseptin-S6 (Phyllomedusa sauvagei (Sauvage's leaf frog)).